Consider the following 24-residue polypeptide: MARRGFSCLLLSTTATDLPVKRRT.

It belongs to the humanin family. As to expression, highly expressed in the kidney, heart muscle and testis.

It is found in the secreted. Its subcellular location is the cytoplasm. Functionally, plays a role as a neuroprotective and antiapoptotic factor. In Homo sapiens (Human), this protein is Humanin-like 9.